A 722-amino-acid chain; its full sequence is Zinc finger protein 219 (722 aa).

The tract at residues 1–21 is disordered; that stretch reads MEGSRPRAPSGHLAPSPPAFD. At serine 16 the chain carries Phosphoserine. C2H2-type zinc fingers lie at residues 57 to 79 and 85 to 107; these read FPCP…LRAH and FQCP…LRTH. Residues 137-160 form a disordered region; that stretch reads ARSSGGMQATPATEGLARPQAPSS. 2 C2H2-type zinc fingers span residues 163–186 and 189–212; these read FRCP…HILH and WKCG…LTAH. The segment at 215 to 275 is disordered; the sequence is PERPLAATSA…EEPPAPPEFR (61 aa). Pro residues-rich tracts occupy residues 225 to 247 and 259 to 272; these read APPP…PQPE and TPAP…PAPP. 2 consecutive C2H2-type zinc fingers follow at residues 274-296 and 302-324; these read FRCQ…MRKH and HACP…MKVH. Residues 384–495 form a disordered region; the sequence is LRAGEGRPNG…GTRPEGGRGA (112 aa). Over residues 390–404 the composition is skewed to gly residues; it reads RPNGEGAEPGPGRSF. Positions 425 to 438 are enriched in acidic residues; sequence EPEEEEEVVEAEEE. Low complexity predominate over residues 463-477; that stretch reads SASAAGAQARSTATQ. 2 C2H2-type zinc fingers span residues 498 to 520 and 526 to 548; these read KDCP…LRVH and YKCP…LQRH. Disordered stretches follow at residues 542 to 648 and 668 to 722; these read KYHL…LHRC and HHSR…GQER. The segment covering 558–568 has biased composition (pro residues); sequence PGPPPEPPPPS. Residues 634–643 show a composition bias toward gly residues; the sequence is GPGGEAGPGG. Residues 646–668 form a C2H2-type 9 zinc finger; that stretch reads HRCLFCPFATGAPELMALHLQVH. The span at 668–677 shows a compositional bias: basic residues; sequence HHSRRARGRR. A Phosphoserine modification is found at serine 692. Position 695 is a phosphothreonine (threonine 695). At serine 698 the chain carries Phosphoserine.

This sequence belongs to the krueppel C2H2-type zinc-finger protein family. Interacts with SOX9 (via C-terminus). Ubiquitous.

Its subcellular location is the nucleus. Transcriptional regulator. Recognizes and binds 2 copies of the core DNA sequence motif 5'-GGGGG-3'. Binds to the HMGN1 promoter and may repress HMGN1 expression. Regulates SNCA expression in primary cortical neurons. Binds to the COL2A1 promoter and activates COL2A1 expression, as part of a complex with SOX9. Plays a role in chondrocyte differentiation. The polypeptide is Zinc finger protein 219 (ZNF219) (Homo sapiens (Human)).